Here is a 98-residue protein sequence, read N- to C-terminus: NADH-ubiquinone oxidoreductase chain 4L (98 aa).

3 consecutive transmembrane segments (helical) span residues 1 to 21 (MPSIYINIFLAFILALLGMLV), 29 to 49 (SLLCLEGMMLSLFVLITLTAL), and 61 to 81 (IILLVFAACEAAVGLALLVMV).

This sequence belongs to the complex I subunit 4L family. As to quaternary structure, core subunit of respiratory chain NADH dehydrogenase (Complex I) which is composed of 45 different subunits.

It localises to the mitochondrion inner membrane. It catalyses the reaction a ubiquinone + NADH + 5 H(+)(in) = a ubiquinol + NAD(+) + 4 H(+)(out). Its function is as follows. Core subunit of the mitochondrial membrane respiratory chain NADH dehydrogenase (Complex I) which catalyzes electron transfer from NADH through the respiratory chain, using ubiquinone as an electron acceptor. Part of the enzyme membrane arm which is embedded in the lipid bilayer and involved in proton translocation. The sequence is that of NADH-ubiquinone oxidoreductase chain 4L (MT-ND4L) from Oryctolagus cuniculus (Rabbit).